Reading from the N-terminus, the 168-residue chain is Protein A40 (168 aa).

At 1–9 the chain is on the cytoplasmic side; that stretch reads MNKPKTDYA. The helical; Signal-anchor for type II membrane protein transmembrane segment at 10-30 threads the bilayer; that stretch reads GYACCVICGLIVGIIFTATLL. Over 31 to 168 the chain is Extracellular; the sequence is KVVERKLVHT…TTFLSYHYFG (138 aa). The region spanning 63–168 is the C-type lectin domain; the sequence is YNNKCIHLST…TTFLSYHYFG (106 aa).

The protein belongs to the poxviridae A40 protein family.

It localises to the host membrane. This chain is Protein A40, found in Homo sapiens (Human).